A 678-amino-acid chain; its full sequence is Endopolyphosphatase (678 aa).

Residues Met-1 to Arg-2 lie on the Cytoplasmic side of the membrane. The helical; Signal-anchor for type II membrane protein transmembrane segment at Ser-3 to Ile-23 threads the bilayer. Over Ser-24–Asp-678 the chain is Vacuolar. The segment at Tyr-70–Glu-109 is disordered. Positions Asp-87–Glu-103 are enriched in basic and acidic residues. Residues Asn-138, Asn-369, and Asn-447 are each glycosylated (N-linked (GlcNAc...) asparagine). Residues Lys-504 to Asn-547 form a disordered region. Positions Cys-529–Pro-543 are enriched in basic residues. 2 N-linked (GlcNAc...) asparagine glycosylation sites follow: Asn-591 and Asn-616.

The protein belongs to the endopolyphosphatase PPN1 family. A divalent metal cation serves as cofactor. Post-translationally, processing by proteases in the vacuole may be required for activation.

The protein localises to the vacuole membrane. It carries out the reaction [phosphate](n+1) + n H2O = (n+1) phosphate + n H(+). Functionally, catalyzes the hydrolysis of inorganic polyphosphate (polyP) chains of many hundreds of phosphate residues into shorter lengths. The polypeptide is Endopolyphosphatase (PPN1) (Cryptococcus neoformans var. neoformans serotype D (strain JEC21 / ATCC MYA-565) (Filobasidiella neoformans)).